Here is a 437-residue protein sequence, read N- to C-terminus: Purple acid phosphatase 18 (437 aa).

The N-terminal stretch at 1-23 (MEKWGILLLVTLSVSIIFTSAAA) is a signal peptide. Aspartate 148, aspartate 175, and tyrosine 178 together coordinate Fe cation. Aspartate 175 provides a ligand contact to Zn(2+). Asparagine 208 and histidine 291 together coordinate Zn(2+). Asparagine 208 is a substrate binding site. Histidine 301 (proton donor) is an active-site residue. Histidine 328 contacts Zn(2+). 328–330 (HVH) is a binding site for substrate. Residue histidine 330 coordinates Fe cation. Residue asparagine 390 is glycosylated (N-linked (GlcNAc...) asparagine).

The protein belongs to the metallophosphoesterase superfamily. Purple acid phosphatase family. As to quaternary structure, homodimer. Fe cation is required as a cofactor. Requires Zn(2+) as cofactor. As to expression, expressed in roots, stems, leaves, flowers and siliques.

The protein resides in the secreted. It carries out the reaction a phosphate monoester + H2O = an alcohol + phosphate. The protein is Purple acid phosphatase 18 (PAP18) of Arabidopsis thaliana (Mouse-ear cress).